The chain runs to 471 residues: Plasmepsin VII (471 aa).

The signal sequence occupies residues M1–S24. Positions Y96–V438 constitute a Peptidase A1 domain. Active-site residues include D115 and D325.

The protein belongs to the peptidase A1 family.

It is found in the cytoplasm. The polypeptide is Plasmepsin VII (Plasmodium berghei (strain Anka)).